A 473-amino-acid polypeptide reads, in one-letter code: 1-aminocyclopropane-1-carboxylate synthase (473 aa).

Substrate-binding positions include 84 to 85, tyrosine 145, and aspartate 151; that span reads DY. N6-(pyridoxal phosphate)lysine is present on lysine 273.

Belongs to the class-I pyridoxal-phosphate-dependent aminotransferase family. As to quaternary structure, homodimer. It depends on pyridoxal 5'-phosphate as a cofactor.

It carries out the reaction S-adenosyl-L-methionine = 1-aminocyclopropane-1-carboxylate + S-methyl-5'-thioadenosine + H(+). The catalysed reaction is (2S)-2-amino-3-butenoate + H2O = 2-oxobutanoate + NH4(+). It functions in the pathway alkene biosynthesis; ethylene biosynthesis via S-adenosyl-L-methionine; ethylene from S-adenosyl-L-methionine: step 1/2. Inhibited by L-aminoethoxyvinylglycine (AVG). Inhibited by L-vinylglycine (L-VG). Inhibited by S-methylmethionine through a L-VG ketimine intermediate. Its function is as follows. Catalyzes the formation of 1-aminocyclopropane-1-carboxylate, a direct precursor of ethylene in higher plants. Also catalyzes the conversion of L-vinylglycine (L-VG) to alpha-ketobutyrate and ammonia. Can use S-methylmethionine as substrate. The protein is 1-aminocyclopropane-1-carboxylate synthase of Malus domestica (Apple).